The chain runs to 277 residues: Large ribosomal subunit protein uL2 (277 aa).

Residues 222–277 (GSVMNPNDHPHGGGEGKAPVGRKAPSTPWGKPALGLKTRNKKAKSDKLIVRRRNQK) form a disordered region.

The protein belongs to the universal ribosomal protein uL2 family. In terms of assembly, part of the 50S ribosomal subunit. Forms a bridge to the 30S subunit in the 70S ribosome.

In terms of biological role, one of the primary rRNA binding proteins. Required for association of the 30S and 50S subunits to form the 70S ribosome, for tRNA binding and peptide bond formation. It has been suggested to have peptidyltransferase activity; this is somewhat controversial. Makes several contacts with the 16S rRNA in the 70S ribosome. This is Large ribosomal subunit protein uL2 from Streptococcus agalactiae serotype Ia (strain ATCC 27591 / A909 / CDC SS700).